The sequence spans 192 residues: MTHYILLIIGTALINNFVLVKFLGLCPFMGVSKKIETAVGMGLATMFVLTVASLCAYLVDHYILIPLNATFLRTLVFILVIAVVVQFTEMAINKTSPTLYRLLGIFLPLITTNCAVLGVALLNVNLAHNLTESVVYGFGASLGFSLVLVLFAALRERLVAADIPATFRGSAIALITAGLMSLAFMGFTGLVK.

6 helical membrane-spanning segments follow: residues 5 to 25 (ILLIIGTALINNFVLVKFLGL), 39 to 59 (VGMGLATMFVLTVASLCAYLV), 63 to 83 (ILIPLNATFLRTLVFILVIAV), 102 to 122 (LLGIFLPLITTNCAVLGVALL), 134 to 154 (VVYGFGASLGFSLVLVLFAAL), and 171 to 191 (AIALITAGLMSLAFMGFTGLV).

The protein belongs to the NqrDE/RnfAE family. In terms of assembly, the complex is composed of six subunits: RnfA, RnfB, RnfC, RnfD, RnfE and RnfG.

It localises to the cell inner membrane. In terms of biological role, part of a membrane-bound complex that couples electron transfer with translocation of ions across the membrane. In Haemophilus influenzae (strain 86-028NP), this protein is Ion-translocating oxidoreductase complex subunit A.